The primary structure comprises 452 residues: Phosphatidylinositol N-acetylglucosaminyltransferase GPI3 subunit (452 aa).

Residues 407 to 427 (LYLLCGIVEYMLFFLLEWLYP) traverse the membrane as a helical segment.

This sequence belongs to the glycosyltransferase group 1 family. Component of the phosphatidylinositol N-acetylglucosaminyltransferase complex composed of at least GPI1, GPI2, GPI3, GPI15, GPI19 and ERI1.

The protein localises to the endoplasmic reticulum membrane. It carries out the reaction a 1,2-diacyl-sn-glycero-3-phospho-(1D-myo-inositol) + UDP-N-acetyl-alpha-D-glucosamine = a 6-(N-acetyl-alpha-D-glucosaminyl)-1-(1,2-diacyl-sn-glycero-3-phospho)-1D-myo-inositol + UDP + H(+). It participates in glycolipid biosynthesis; glycosylphosphatidylinositol-anchor biosynthesis. Inhibited by Ras, probably via the interaction between RAS2 and ERI1. Catalytic subunit in the complex catalyzing the transfer of N-acetylglucosamine from UDP-N-acetylglucosamine to phosphatidylinositol, the first step of GPI biosynthesis. The polypeptide is Phosphatidylinositol N-acetylglucosaminyltransferase GPI3 subunit (SPT14) (Saccharomyces cerevisiae (strain YJM789) (Baker's yeast)).